The sequence spans 352 residues: Molybdenum import ATP-binding protein ModC (352 aa).

One can recognise an ABC transporter domain in the interval 1–229 (MLELNFSQTL…SVMHPWLPKE (229 aa)). 31 to 38 (GVSGAGKT) provides a ligand contact to ATP. One can recognise a Mop domain in the interval 289–352 (QTSIRNVLRA…AQVKSVSITA (64 aa)).

It belongs to the ABC transporter superfamily. Molybdate importer (TC 3.A.1.8) family. As to quaternary structure, the complex is composed of two ATP-binding proteins (ModC), two transmembrane proteins (ModB) and a solute-binding protein (ModA).

It localises to the cell inner membrane. It catalyses the reaction molybdate(out) + ATP + H2O = molybdate(in) + ADP + phosphate + H(+). In terms of biological role, part of the ABC transporter complex ModABC involved in molybdenum import. Responsible for energy coupling to the transport system. This is Molybdenum import ATP-binding protein ModC from Salmonella typhi.